A 518-amino-acid chain; its full sequence is Xylose import ATP-binding protein XylG (518 aa).

ABC transporter domains are found at residues 6–245 (LQMN…VGRE) and 262–507 (FEAR…LSHS). Position 38-45 (38-45 (GENGAGKS)) interacts with ATP.

This sequence belongs to the ABC transporter superfamily. Xylose importer (TC 3.A.1.2.4) family. In terms of assembly, the complex is composed of two ATP-binding proteins (XylG), two transmembrane proteins (XylH) and a solute-binding protein (XylF).

The protein resides in the cell inner membrane. The enzyme catalyses D-xylose(out) + ATP + H2O = D-xylose(in) + ADP + phosphate + H(+). In terms of biological role, part of the ABC transporter complex XylFGH involved in xylose import. Responsible for energy coupling to the transport system. This is Xylose import ATP-binding protein XylG from Pseudomonas syringae pv. syringae (strain B728a).